The primary structure comprises 339 residues: Deoxyhypusine hydroxylase (339 aa).

HEAT-like PBS-type repeat units follow at residues 71-97 and 104-130; these read LKHELAYCLGQTRNPDAVSYLLEVVKN and CRHEAAEGLGALGFDTSLDVLKALRDD. Fe cation contacts are provided by H73, E74, H106, and E107. A disordered region spans residues 159 to 183; it reads EKLKPSDFTSIDPAPPLPMASSQPS. 3 HEAT-like PBS-type repeats span residues 200-233, 238-264, and 271-298; these read QRYRAMFALRDLASPPDLPTAVEAVEALAKGLKD, FRHEVAFVFGQLCHPASVPSLTETLSD, and VRHEAAEALGSLGDVEGVEDTLKKFLND. H240, E241, H273, and E274 together coordinate Fe cation.

The protein belongs to the deoxyhypusine hydroxylase family. The cofactor is Fe(2+).

The protein resides in the cytoplasm. The protein localises to the nucleus. It carries out the reaction [eIF5A protein]-deoxyhypusine + AH2 + O2 = [eIF5A protein]-hypusine + A + H2O. It participates in protein modification; eIF5A hypusination. Its function is as follows. Catalyzes the hydroxylation of the N(6)-(4-aminobutyl)-L-lysine intermediate to form hypusine, an essential post-translational modification only found in mature eIF-5A factor. The polypeptide is Deoxyhypusine hydroxylase (lia1) (Aspergillus oryzae (strain ATCC 42149 / RIB 40) (Yellow koji mold)).